The primary structure comprises 218 residues: MIGKITGRLEYRASDHVLIDVRGVGYLVFCSERTLAALPGVGEVVALYTDLLVREDVMQLFGFTTLTEKEWHRLLTSVQGVGAKASLAILGTLGADGVSRAIALGDWNAVKAAKGVGPKIAQRVVLDLKDKAPSVMGMSDTQATVAAQSSDAVIETRAAPSPVVQNPSAQAEALSALSNLGYAPGDAAAAVAQAAGELPDAETPDLIRAALKRLAPKG.

A domain I region spans residues 1 to 64 (MIGKITGRLE…EDVMQLFGFT (64 aa)). Residues 65-143 (TLTEKEWHRL…SVMGMSDTQA (79 aa)) are domain II. Residues 144-164 (TVAAQSSDAVIETRAAPSPVV) form a flexible linker region. Residues 165–218 (QNPSAQAEALSALSNLGYAPGDAAAAVAQAAGELPDAETPDLIRAALKRLAPKG) form a domain III region.

It belongs to the RuvA family. In terms of assembly, homotetramer. Forms an RuvA(8)-RuvB(12)-Holliday junction (HJ) complex. HJ DNA is sandwiched between 2 RuvA tetramers; dsDNA enters through RuvA and exits via RuvB. An RuvB hexamer assembles on each DNA strand where it exits the tetramer. Each RuvB hexamer is contacted by two RuvA subunits (via domain III) on 2 adjacent RuvB subunits; this complex drives branch migration. In the full resolvosome a probable DNA-RuvA(4)-RuvB(12)-RuvC(2) complex forms which resolves the HJ.

The protein localises to the cytoplasm. In terms of biological role, the RuvA-RuvB-RuvC complex processes Holliday junction (HJ) DNA during genetic recombination and DNA repair, while the RuvA-RuvB complex plays an important role in the rescue of blocked DNA replication forks via replication fork reversal (RFR). RuvA specifically binds to HJ cruciform DNA, conferring on it an open structure. The RuvB hexamer acts as an ATP-dependent pump, pulling dsDNA into and through the RuvAB complex. HJ branch migration allows RuvC to scan DNA until it finds its consensus sequence, where it cleaves and resolves the cruciform DNA. In Roseobacter denitrificans (strain ATCC 33942 / OCh 114) (Erythrobacter sp. (strain OCh 114)), this protein is Holliday junction branch migration complex subunit RuvA.